The primary structure comprises 109 residues: Ribonuclease P protein component 4 (109 aa).

Zn(2+)-binding residues include Cys-65, Cys-68, Cys-94, and Cys-97.

It belongs to the eukaryotic/archaeal RNase P protein component 4 family. Consists of a catalytic RNA component and at least 4-5 protein subunits. It depends on Zn(2+) as a cofactor.

It localises to the cytoplasm. It catalyses the reaction Endonucleolytic cleavage of RNA, removing 5'-extranucleotides from tRNA precursor.. In terms of biological role, part of ribonuclease P, a protein complex that generates mature tRNA molecules by cleaving their 5'-ends. The sequence is that of Ribonuclease P protein component 4 from Methanococcus vannielii (strain ATCC 35089 / DSM 1224 / JCM 13029 / OCM 148 / SB).